We begin with the raw amino-acid sequence, 285 residues long: tRNA uridine(34) hydroxylase (285 aa).

The Rhodanese domain maps to 130–225 (RGDDVVFFDG…YGEAFGDTGL (96 aa)). The active-site Cysteine persulfide intermediate is the Cys185.

The protein belongs to the TrhO family.

The enzyme catalyses uridine(34) in tRNA + AH2 + O2 = 5-hydroxyuridine(34) in tRNA + A + H2O. In terms of biological role, catalyzes oxygen-dependent 5-hydroxyuridine (ho5U) modification at position 34 in tRNAs. This Rhodococcus opacus (strain B4) protein is tRNA uridine(34) hydroxylase.